We begin with the raw amino-acid sequence, 839 residues long: MDVSLCPAKCSFWRIFLLGSVWLDYVGSVLACPANCVCSKTEINCRRPDDGNLFPLLEGQDSGNSNGNASINITDISRNITSIHIENWRSLHTLNAVDMELYTGLQKLTIKNSGLRSIQPRAFAKNPHLRYINLSSNRLTTLSWQLFQTLSLRELQLEQNFFNCSCDIRWMQLWQEQGEAKLNSQNLYCINADGSQLPLFRMNISQCDLPEISVSHVNLTVREGDNAVITCNGSGSPLPDVDWIVTGLQSINTHQTNLNWTNVHAINLTLVNVTSEDNGFTLTCIAENVVGMSNASVALTVYYPPRVVSLEEPELRLEHCIEFVVRGNPPPTLHWLHNGQPLRESKIIHVEYYQEGEISEGCLLFNKPTHYNNGNYTLIAKNPLGTANQTINGHFLKEPFPESTDNFILFDEVSPTPPITVTHKPEEDTFGVSIAVGLAAFACVLLVVLFVMINKYGRRSKFGMKGPVAVISGEEDSASPLHHINHGITTPSSLDAGPDTVVIGMTRIPVIENPQYFRQGHNCHKPDTYVQHIKRRDIVLKRELGEGAFGKVFLAECYNLSPTKDKMLVAVKALKDPTLAARKDFQREAELLTNLQHEHIVKFYGVCGDGDPLIMVFEYMKHGDLNKFLRAHGPDAMILVDGQPRQAKGELGLSQMLHIASQIASGMVYLASQHFVHRDLATRNCLVGANLLVKIGDFGMSRDVYSTDYYRLFNPSGNDFCIWCEVGGHTMLPIRWMPPESIMYRKFTTESDVWSFGVILWEIFTYGKQPWFQLSNTEVIECITQGRVLERPRVCPKEVYDVMLGCWQREPQQRLNIKEIYKILHALGKATPIYLDILG.

The first 31 residues, 1–31 (MDVSLCPAKCSFWRIFLLGSVWLDYVGSVLA), serve as a signal peptide directing secretion. 2 disulfides stabilise this stretch: Cys-32/Cys-38 and Cys-36/Cys-45. Residues 32-429 (CPANCVCSKT…TVTHKPEEDT (398 aa)) lie on the Extracellular side of the membrane. N-linked (GlcNAc...) asparagine glycosylation is found at Asn-72 and Asn-79. LRR repeat units follow at residues 104-125 (GLQKLTIKNSGLRSIQPRAFAK) and 128-149 (HLRYINLSSNRLTTLSWQLFQT). N-linked (GlcNAc...) asparagine glycans are attached at residues Asn-133 and Asn-163. The LRRCT domain occupies 160–209 (NFFNCSCDIRWMQLWQEQGEAKLNSQNLYCINADGSQLPLFRMNISQCDL). Cystine bridges form between Cys-164-Cys-189 and Cys-166-Cys-207. Residues Asn-203, Asn-218, Asn-232, Asn-259, Asn-267, Asn-272, and Asn-294 are each glycosylated (N-linked (GlcNAc...) asparagine). 2 consecutive Ig-like C2-type domains span residues 210-300 (PEIS…VALT) and 309-382 (SLEE…IAKN). Cys-231 and Cys-284 form a disulfide bridge. Cys-320 and Cys-362 are disulfide-bonded. Asn-375 and Asn-388 each carry an N-linked (GlcNAc...) asparagine glycan. A helical transmembrane segment spans residues 430-453 (FGVSIAVGLAAFACVLLVVLFVMI). Over 454–839 (NKYGRRSKFG…ATPIYLDILG (386 aa)) the chain is Cytoplasmic. Position 493 is a phosphoserine (Ser-493). Tyr-516 is modified (phosphotyrosine; by autocatalysis). In terms of domain architecture, Protein kinase spans 538-839 (IVLKRELGEG…ATPIYLDILG (302 aa)). ATP-binding positions include 544 to 552 (LGEGAFGKV) and Lys-572. Asp-679 functions as the Proton acceptor in the catalytic mechanism. Residues Tyr-705, Tyr-709, and Tyr-710 each carry the phosphotyrosine; by autocatalysis modification.

This sequence belongs to the protein kinase superfamily. Tyr protein kinase family. Insulin receptor subfamily. Exists in a dynamic equilibrium between monomeric (low affinity) and dimeric (high affinity) structures. Binds SH2B2. Interacts with SQSTM1 and KIDINS220. Interacts with PTPRS. Interacts with MAPK8IP3/JIP3. Post-translationally, ligand-mediated auto-phosphorylation. In terms of tissue distribution, widely expressed but mainly in nervous tissue. Isoform 2 is expressed at higher levels in adult brain than in fetal brain.

The protein localises to the membrane. It carries out the reaction L-tyrosyl-[protein] + ATP = O-phospho-L-tyrosyl-[protein] + ADP + H(+). In terms of biological role, receptor tyrosine kinase involved in nervous system and probably heart development. Upon binding of its ligand NTF3/neurotrophin-3, NTRK3 autophosphorylates and activates different signaling pathways, including the phosphatidylinositol 3-kinase/AKT and the MAPK pathways, that control cell survival and differentiation. The chain is NT-3 growth factor receptor (NTRK3) from Homo sapiens (Human).